The primary structure comprises 144 residues: uncharacterized protein (144 aa).

The 108-residue stretch at 4 to 111 (VFCAIIAGEA…LPPRNGDKLS (108 aa)) folds into the HIT domain. The Histidine triad motif signature appears at 96 to 100 (HVHLH).

This is an uncharacterized protein from Mycobacterium tuberculosis (strain CDC 1551 / Oshkosh).